A 276-amino-acid chain; its full sequence is MPTSLKDTVKLHNGVEMPWFGLGVFKVENGNEATESVKAAIKNGYRSIDTAAIYKNEEGVGIGIKESGVAREELFITSKVWNEDQGYETTLAAFEKSLERLQLDYLDLYLIHWPGKDKYKDTWRALEKLYKDGKIRAIGVSNFQVHHLEELLKDAEIKPMVNQVEFHPRLTQKELRDYCKGQGIQLEAWSPLMQGQLLDNEVLTQIAEKHNKSVAQVILRWDLQHGVVTIPKSIKEHRIIENADIFDFELSQEDMDKIDALNKDERVGPNPDELLF.

Tyr54 acts as the Proton donor in catalysis. His112 lines the substrate pocket. 190–242 contributes to the NADP(+) binding site; it reads SPLMQGQLLDNEVLTQIAEKHNKSVAQVILRWDLQHGVVTIPKSIKEHRIIEN.

This sequence belongs to the aldo/keto reductase family.

The enzyme catalyses (S)-lactaldehyde + NADP(+) = methylglyoxal + NADPH + H(+). In terms of biological role, reduces glyoxal and methylglyoxal (2-oxopropanal). Is not involved in the vitamin B6 biosynthesis. In Bacillus subtilis (strain 168), this protein is Glyoxal reductase (yvgN).